Reading from the N-terminus, the 447-residue chain is Argininosuccinate synthase (447 aa).

ATP is bound by residues 17 to 25 and A43; that span reads AFSGGLDTS. Y99 is a binding site for L-citrulline. ATP-binding residues include G129 and T131. L-aspartate-binding residues include T131, N135, and D136. N135 contributes to the L-citrulline binding site. An ATP-binding site is contributed by D136. Residues R139 and S192 each contribute to the L-citrulline site. Position 194 (D194) interacts with ATP. L-citrulline contacts are provided by T201, E203, and E280.

It belongs to the argininosuccinate synthase family. Type 2 subfamily. As to quaternary structure, homotetramer.

The protein localises to the cytoplasm. The enzyme catalyses L-citrulline + L-aspartate + ATP = 2-(N(omega)-L-arginino)succinate + AMP + diphosphate + H(+). Its pathway is amino-acid biosynthesis; L-arginine biosynthesis; L-arginine from L-ornithine and carbamoyl phosphate: step 2/3. This chain is Argininosuccinate synthase, found in Escherichia coli O139:H28 (strain E24377A / ETEC).